The sequence spans 293 residues: GTPase Era (293 aa).

The region spanning 2–168 (KILFSTIIGR…INEIKKYSYE (167 aa)) is the Era-type G domain. Residues 10–17 (GRPNVGKS) form a G1 region. 10 to 17 (GRPNVGKS) serves as a coordination point for GTP. The interval 36–40 (QATRD) is G2. The G3 stretch occupies residues 57 to 60 (DTPG). Residues 57–61 (DTPGI) and 118–121 (TKID) each bind GTP. A G4 region spans residues 118 to 121 (TKID). A G5 region spans residues 147–149 (ISS). The KH type-2 domain occupies 199-279 (LEQELPHSIL…KLFLKIKVKK (81 aa)).

This sequence belongs to the TRAFAC class TrmE-Era-EngA-EngB-Septin-like GTPase superfamily. Era GTPase family. Monomer.

Its subcellular location is the cytoplasm. The protein resides in the cell membrane. An essential GTPase that binds both GDP and GTP, with rapid nucleotide exchange. Plays a role in 16S rRNA processing and 30S ribosomal subunit biogenesis and possibly also in cell cycle regulation and energy metabolism. This is GTPase Era from Mycoplasmopsis pulmonis (strain UAB CTIP) (Mycoplasma pulmonis).